Consider the following 244-residue polypeptide: MASIRVADEPAFVLHSIPYKETSLILDVFTRQYGRMALIAKGAKRQHSTLRPVLQRFQPLLVSWSGKSELRTLTKSEWVGGMPSLVGDALLCGFYLNELLVKFLAREDDYEKLYDRYAETINALSNLEFESKGLEEILRQFELSLLQETGYAAALDRCVENNEAPLAQEQYVYQPERGVRPVQVDDPGHWPVLTGKSLLAIAISDFSDPETLSESKQLMRFLLGLHLQDQVLTTRQILIDLKKI.

The protein belongs to the RecO family.

Its function is as follows. Involved in DNA repair and RecF pathway recombination. The chain is DNA repair protein RecO from Polynucleobacter necessarius subsp. necessarius (strain STIR1).